A 117-amino-acid polypeptide reads, in one-letter code: Large ribosomal subunit protein bL20 (117 aa).

The protein belongs to the bacterial ribosomal protein bL20 family.

Its function is as follows. Binds directly to 23S ribosomal RNA and is necessary for the in vitro assembly process of the 50S ribosomal subunit. It is not involved in the protein synthesizing functions of that subunit. In Leptospira interrogans serogroup Icterohaemorrhagiae serovar copenhageni (strain Fiocruz L1-130), this protein is Large ribosomal subunit protein bL20.